We begin with the raw amino-acid sequence, 177 residues long: N-acetylmuramoyl-L-alanine amidase A (177 aa).

An N-acetylmuramoyl-L-alanine amidase domain is found at 23–158; that stretch reads QTSAVIMHTM…SGNENRYDPG (136 aa). Cys-114 and Cys-121 are joined by a disulfide.

It localises to the secreted. It carries out the reaction Hydrolyzes the link between N-acetylmuramoyl residues and L-amino acid residues in certain cell-wall glycopeptides.. Its function is as follows. Antibacterial activity against Gram-positive bacteria M.luteus, S.aureus, E.faecalis and P.acidilactici and Gram-negative bacterium E.coli. The chain is N-acetylmuramoyl-L-alanine amidase A (cwhA) from Achromobacter lyticus.